Reading from the N-terminus, the 123-residue chain is SPbeta prophage-derived uncharacterized protein YorE (123 aa).

The chain is SPbeta prophage-derived uncharacterized protein YorE (yorE) from Bacillus subtilis (strain 168).